Consider the following 212-residue polypeptide: tRNA (guanine-N(7)-)-methyltransferase (212 aa).

Residues E44, E69, D96, and D118 each coordinate S-adenosyl-L-methionine. Residue D118 is part of the active site. Residue K122 coordinates substrate. The segment at 124–129 (RHEKRR) is interaction with RNA. Residues D154 and 192–195 (TEYE) contribute to the substrate site.

The protein belongs to the class I-like SAM-binding methyltransferase superfamily. TrmB family.

The catalysed reaction is guanosine(46) in tRNA + S-adenosyl-L-methionine = N(7)-methylguanosine(46) in tRNA + S-adenosyl-L-homocysteine. Its pathway is tRNA modification; N(7)-methylguanine-tRNA biosynthesis. In terms of biological role, catalyzes the formation of N(7)-methylguanine at position 46 (m7G46) in tRNA. The chain is tRNA (guanine-N(7)-)-methyltransferase from Pediococcus pentosaceus (strain ATCC 25745 / CCUG 21536 / LMG 10740 / 183-1w).